The sequence spans 545 residues: CTP synthase (545 aa).

The interval 1–266 is amidoligase domain; the sequence is MKTNYIFVTG…DDYICKRFSL (266 aa). A CTP-binding site is contributed by S14. S14 is a binding site for UTP. ATP contacts are provided by residues 15–20 and D72; that span reads SLGKGI. 2 residues coordinate Mg(2+): D72 and E140. CTP is bound by residues 147–149, 187–192, and K223; these read DIE and KTKPTQ. UTP-binding positions include 187-192 and K223; that span reads KTKPTQ. 239-241 is an ATP binding site; it reads KDV. Residues 291-542 enclose the Glutamine amidotransferase type-1 domain; that stretch reads TIGMVGKYVE…VKAAGKYQKG (252 aa). Residue G352 participates in L-glutamine binding. Residue C379 is the Nucleophile; for glutamine hydrolysis of the active site. Residues 380–383, E403, and R470 contribute to the L-glutamine site; that span reads LGMQ. Active-site residues include H515 and E517.

Belongs to the CTP synthase family. Homotetramer.

The enzyme catalyses UTP + L-glutamine + ATP + H2O = CTP + L-glutamate + ADP + phosphate + 2 H(+). The catalysed reaction is L-glutamine + H2O = L-glutamate + NH4(+). It catalyses the reaction UTP + NH4(+) + ATP = CTP + ADP + phosphate + 2 H(+). It functions in the pathway pyrimidine metabolism; CTP biosynthesis via de novo pathway; CTP from UDP: step 2/2. Allosterically activated by GTP, when glutamine is the substrate; GTP has no effect on the reaction when ammonia is the substrate. The allosteric effector GTP functions by stabilizing the protein conformation that binds the tetrahedral intermediate(s) formed during glutamine hydrolysis. Inhibited by the product CTP, via allosteric rather than competitive inhibition. In terms of biological role, catalyzes the ATP-dependent amination of UTP to CTP with either L-glutamine or ammonia as the source of nitrogen. Regulates intracellular CTP levels through interactions with the four ribonucleotide triphosphates. The chain is CTP synthase from Photorhabdus laumondii subsp. laumondii (strain DSM 15139 / CIP 105565 / TT01) (Photorhabdus luminescens subsp. laumondii).